The primary structure comprises 269 residues: Phosphatidylglycerol--prolipoprotein diacylglyceryl transferase (269 aa).

Transmembrane regions (helical) follow at residues 21–41 (WYGIIIASAVILAVYLSVLEG), 54–74 (LLLYSLPVAIICARIYYVVFE), and 88–108 (IWDGGIAIYGALIGAVIVILI). R136 contacts a 1,2-diacyl-sn-glycero-3-phospho-(1'-sn-glycerol). The next 2 helical transmembrane spans lie at 206–226 (GEVVLSYIIWYSFGRFFIEGM) and 236–256 (LRVSQWLSLILFISAIAAIFY).

The protein belongs to the Lgt family.

It localises to the cell membrane. It carries out the reaction L-cysteinyl-[prolipoprotein] + a 1,2-diacyl-sn-glycero-3-phospho-(1'-sn-glycerol) = an S-1,2-diacyl-sn-glyceryl-L-cysteinyl-[prolipoprotein] + sn-glycerol 1-phosphate + H(+). It participates in protein modification; lipoprotein biosynthesis (diacylglyceryl transfer). Its function is as follows. Catalyzes the transfer of the diacylglyceryl group from phosphatidylglycerol to the sulfhydryl group of the N-terminal cysteine of a prolipoprotein, the first step in the formation of mature lipoproteins. This is Phosphatidylglycerol--prolipoprotein diacylglyceryl transferase from Ligilactobacillus salivarius (strain UCC118) (Lactobacillus salivarius).